A 36-amino-acid chain; its full sequence is Peptide POLARIS (36 aa).

Belongs to the POLARIS peptide family. As to expression, mostly expressed in the embryonic root from the heart stage and in the seedling primary and lateral root tips, especially in the columella initials and lateral root cap. Also detectable in aerial parts of the seedling, sepals and leaves, principally in vascular tissues of the lamina and petiole.

In terms of biological role, required for correct root growth and vascular development, probably by modulating both cell division rate in meristems and cell elongation in roots. Negative regulator of the ethylene signaling pathway that modulates microtubule cytoskeleton dynamics and auxin transport and homeostasis, and possibly cytokinin signaling, thus influencing root growth and lateral root development. This chain is Peptide POLARIS (PLS), found in Arabidopsis thaliana (Mouse-ear cress).